The chain runs to 279 residues: Large ribosomal subunit protein uL2 (279 aa).

The interval 223-279 (PVAMNPVDHPMGGGEGRASGGHPRSRKGLPAKGFKTRSRTKASNKYIVERRKTRKKK) is disordered. Residues 245–264 (PRSRKGLPAKGFKTRSRTKA) are compositionally biased toward basic residues.

The protein belongs to the universal ribosomal protein uL2 family. In terms of assembly, part of the 50S ribosomal subunit. Forms a bridge to the 30S subunit in the 70S ribosome.

Functionally, one of the primary rRNA binding proteins. Required for association of the 30S and 50S subunits to form the 70S ribosome, for tRNA binding and peptide bond formation. It has been suggested to have peptidyltransferase activity; this is somewhat controversial. Makes several contacts with the 16S rRNA in the 70S ribosome. This is Large ribosomal subunit protein uL2 from Christiangramia forsetii (strain DSM 17595 / CGMCC 1.15422 / KT0803) (Gramella forsetii).